Consider the following 189-residue polypeptide: dCTP deaminase (189 aa).

Residues 112-117 (KSTYAR), 136-138 (TLE), Q157, Y171, and Q181 contribute to the dCTP site. E138 functions as the Proton donor/acceptor in the catalytic mechanism.

This sequence belongs to the dCTP deaminase family. Homotrimer.

The catalysed reaction is dCTP + H2O + H(+) = dUTP + NH4(+). It functions in the pathway pyrimidine metabolism; dUMP biosynthesis; dUMP from dCTP (dUTP route): step 1/2. In terms of biological role, catalyzes the deamination of dCTP to dUTP. The chain is dCTP deaminase from Methylacidiphilum infernorum (isolate V4) (Methylokorus infernorum (strain V4)).